A 256-amino-acid chain; its full sequence is Ribosomal RNA small subunit methyltransferase J (256 aa).

S-adenosyl-L-methionine contacts are provided by residues 101–102 (RD), 117–118 (ER), and Asp-174.

Belongs to the methyltransferase superfamily. RsmJ family.

It localises to the cytoplasm. The enzyme catalyses guanosine(1516) in 16S rRNA + S-adenosyl-L-methionine = N(2)-methylguanosine(1516) in 16S rRNA + S-adenosyl-L-homocysteine + H(+). Its function is as follows. Specifically methylates the guanosine in position 1516 of 16S rRNA. This chain is Ribosomal RNA small subunit methyltransferase J, found in Chromohalobacter salexigens (strain ATCC BAA-138 / DSM 3043 / CIP 106854 / NCIMB 13768 / 1H11).